Reading from the N-terminus, the 299-residue chain is NAD kinase (299 aa).

The active-site Proton acceptor is Asp-75. Residues 75-76 (DG), 149-150 (ND), Arg-177, Asp-179, 190-195 (TAYALS), Ala-214, and Gln-248 contribute to the NAD(+) site.

Belongs to the NAD kinase family. Requires a divalent metal cation as cofactor.

The protein resides in the cytoplasm. It catalyses the reaction NAD(+) + ATP = ADP + NADP(+) + H(+). Involved in the regulation of the intracellular balance of NAD and NADP, and is a key enzyme in the biosynthesis of NADP. Catalyzes specifically the phosphorylation on 2'-hydroxyl of the adenosine moiety of NAD to yield NADP. The protein is NAD kinase of Burkholderia thailandensis (strain ATCC 700388 / DSM 13276 / CCUG 48851 / CIP 106301 / E264).